The primary structure comprises 828 residues: Protein TAPT1 homolog (828 aa).

Composition is skewed to low complexity over residues 67-83 (NNNN…GNHI), 212-233 (QQTQ…SQQP), and 302-321 (SNNN…NNNN). 3 disordered regions span residues 67–92 (NNNN…NSSG), 212–236 (QQTQ…PFSY), and 297–346 (QTTP…TSSI). The next 5 membrane-spanning stretches (helical) occupy residues 428 to 448 (ISFG…FLPI), 472 to 492 (QIFD…LNFI), 562 to 582 (ILGP…HSLV), 722 to 742 (SSWG…SIVV), and 754 to 774 (IFGI…KIFI). Residues 797-822 (LSSSSSSSSSNSLNTTSTTSTSTSTT) are compositionally biased toward low complexity. A disordered region spans residues 797-828 (LSSSSSSSSSNSLNTTSTTSTSTSTTNDKKNN).

Belongs to the TAPT1 family.

The protein resides in the membrane. This is Protein TAPT1 homolog from Dictyostelium discoideum (Social amoeba).